The chain runs to 513 residues: Maturase K (513 aa).

The protein belongs to the intron maturase 2 family. MatK subfamily.

It localises to the plastid. It is found in the chloroplast. In terms of biological role, usually encoded in the trnK tRNA gene intron. Probably assists in splicing its own and other chloroplast group II introns. The protein is Maturase K of Molinia caerulea (Purple moor-grass).